Here is a 94-residue protein sequence, read N- to C-terminus: MTKSELIERLATQQSHIPAKVVEDAVKEMLEHMASTLAQGERIEIRGFGSFSLHYRAPRTGRNPKTGDKVELEGKYVPHFKPGKELRDRANIYG.

It belongs to the bacterial histone-like protein family. Heterodimer of an alpha and a beta chain.

Its function is as follows. This protein is one of the two subunits of integration host factor, a specific DNA-binding protein that functions in genetic recombination as well as in transcriptional and translational control. In Escherichia fergusonii (strain ATCC 35469 / DSM 13698 / CCUG 18766 / IAM 14443 / JCM 21226 / LMG 7866 / NBRC 102419 / NCTC 12128 / CDC 0568-73), this protein is Integration host factor subunit beta.